We begin with the raw amino-acid sequence, 383 residues long: Putative dehydratase subunit YjiM (383 aa).

It belongs to the FldB/FldC dehydratase alpha/beta subunit family.

In Escherichia coli (strain K12), this protein is Putative dehydratase subunit YjiM (yjiM).